Reading from the N-terminus, the 307-residue chain is Elongation factor Ts (307 aa).

The segment at 80-83 is involved in Mg(2+) ion dislocation from EF-Tu; it reads TDFV.

This sequence belongs to the EF-Ts family.

It localises to the cytoplasm. Functionally, associates with the EF-Tu.GDP complex and induces the exchange of GDP to GTP. It remains bound to the aminoacyl-tRNA.EF-Tu.GTP complex up to the GTP hydrolysis stage on the ribosome. This Clostridium botulinum (strain 657 / Type Ba4) protein is Elongation factor Ts.